Here is a 463-residue protein sequence, read N- to C-terminus: Argininosuccinate lyase (463 aa).

Belongs to the lyase 1 family. Argininosuccinate lyase subfamily.

The protein resides in the cytoplasm. It catalyses the reaction 2-(N(omega)-L-arginino)succinate = fumarate + L-arginine. Its pathway is amino-acid biosynthesis; L-arginine biosynthesis; L-arginine from L-ornithine and carbamoyl phosphate: step 3/3. This is Argininosuccinate lyase from Bradyrhizobium sp. (strain BTAi1 / ATCC BAA-1182).